A 355-amino-acid polypeptide reads, in one-letter code: Peptide chain release factor 1 (355 aa).

At Q233 the chain carries N5-methylglutamine. The interval 280–310 (ERRKKEQKRANNRRGQVGSGDRSERIRTYNF) is disordered.

Belongs to the prokaryotic/mitochondrial release factor family. Post-translationally, methylated by PrmC. Methylation increases the termination efficiency of RF1.

The protein localises to the cytoplasm. Peptide chain release factor 1 directs the termination of translation in response to the peptide chain termination codons UAG and UAA. The polypeptide is Peptide chain release factor 1 (Rickettsia canadensis (strain McKiel)).